Consider the following 261-residue polypeptide: MLICNDKSNPKTLLEEIMALRPWRKGPFEISQIKIDSEWDSSIKWDLVKNATPLKDKVVADVGCNNGYYLFKMLEHGPKSLVGFDPGVLVKKQFEFLAPFFDKEKKIIYESLGVEDLHEKYPNAFDVIFCLGVLYHRKSPLEALKALYHALKMSGELVLDTLIIDSPLDIALCPKKTYAKMKNVYFIPSVSALKGWCERVGFENFEILSVLKTTPKEQRKTDFILGQSLEDFLDKTDPSKTLEGYDAPLRGYFKMLKPSKL.

Carboxy-S-adenosyl-L-methionine is bound by residues K25, W39, K44, G63, 114–115, Y135, and R250; that span reads VE.

Belongs to the class I-like SAM-binding methyltransferase superfamily. CmoB family. In terms of assembly, homotetramer.

The enzyme catalyses carboxy-S-adenosyl-L-methionine + 5-hydroxyuridine(34) in tRNA = 5-carboxymethoxyuridine(34) in tRNA + S-adenosyl-L-homocysteine + H(+). In terms of biological role, catalyzes carboxymethyl transfer from carboxy-S-adenosyl-L-methionine (Cx-SAM) to 5-hydroxyuridine (ho5U) to form 5-carboxymethoxyuridine (cmo5U) at position 34 in tRNAs. This Helicobacter pylori (strain Shi470) protein is tRNA U34 carboxymethyltransferase.